The chain runs to 1207 residues: Ras GTPase-activating protein gap-2 (1207 aa).

Disordered stretches follow at residues 1-29 and 221-316; these read MKVI…SCTK and RMSS…GSLR. The 344-residue stretch at 40–383 folds into the PH domain; it reads PPICHGWLIV…WMENLRKTMN (344 aa). The segment covering 223-236 has biased composition (low complexity); it reads SSSSHNLSTRLSGS. Polar residues-rich tracts occupy residues 237–247 and 286–297; these read TQNLNQPTNAY and ASNTPSRDSSLY. The region spanning 374–490 is the C2 domain; it reads WMENLRKTMN…SSRSPVERWY (117 aa). Residues 495–504 are compositionally biased toward polar residues; that stretch reads SHSDSGTSRI. The interval 495 to 516 is disordered; the sequence is SHSDSGTSRIASALGGKSSSQE. The region spanning 579–789 is the Ras-GAP domain; that stretch reads NLAKEFLCDL…HRMKDFLLRI (211 aa). 4 disordered regions span residues 856 to 903, 923 to 1013, 1086 to 1107, and 1163 to 1207; these read GVFH…LGRS, FQTP…SSSS, ATGG…RASR, and LKSK…VVPN. Composition is skewed to polar residues over residues 862–876 and 891–903; these read MVQQ…SPQQ and TPPT…LGRS. The segment covering 939-953 has biased composition (low complexity); sequence TGTSSSRTSDKTTSS. Residues 955–972 are compositionally biased toward basic and acidic residues; the sequence is EIRDDTDSDFELREDRGR. The segment covering 985–1013 has biased composition (low complexity); that stretch reads ASPSSSQQASSGYLSNNPSRSSYSNSSSS. Low complexity predominate over residues 1181–1207; sequence SGASEDSYDSLSSLDRPSRQSLVVVPN.

Mainly expressed in gonads and vulval cells. Isoform c in expressed in pharyngeal epithelial cells and several rectal/blast cells in the tail region. Isoform f is weakly expressed in four cells symmetrically located in the vulval region. Isoform g is strongly expressed in the pharyngeal muscle cells m6 in addition to several cells in the tail region.

The protein localises to the cytoplasm. In terms of biological role, GTPase-activating protein, which acts as a negative regulator for the member of the Ras family let-60. Probably decreases the signaling activity of Ras by stimulating its intrinsic GTPase activity, thereby lowering the levels of GTP-bound, active Ras. The different isoforms may play a distinct role in specific tissues. The protein is Ras GTPase-activating protein gap-2 (gap-2) of Caenorhabditis elegans.